Consider the following 319-residue polypeptide: Ribose-phosphate pyrophosphokinase (319 aa).

Residues 41–43 (DGE) and 100–101 (RQ) each bind ATP. The Mg(2+) site is built by His134 and Asp176. The active site involves Lys199. Residues Arg201, Asp225, and 229 to 233 (DTAGT) each bind D-ribose 5-phosphate.

The protein belongs to the ribose-phosphate pyrophosphokinase family. Class I subfamily. Homohexamer. Mg(2+) serves as cofactor.

It localises to the cytoplasm. It carries out the reaction D-ribose 5-phosphate + ATP = 5-phospho-alpha-D-ribose 1-diphosphate + AMP + H(+). It participates in metabolic intermediate biosynthesis; 5-phospho-alpha-D-ribose 1-diphosphate biosynthesis; 5-phospho-alpha-D-ribose 1-diphosphate from D-ribose 5-phosphate (route I): step 1/1. In terms of biological role, involved in the biosynthesis of the central metabolite phospho-alpha-D-ribosyl-1-pyrophosphate (PRPP) via the transfer of pyrophosphoryl group from ATP to 1-hydroxyl of ribose-5-phosphate (Rib-5-P). This is Ribose-phosphate pyrophosphokinase from Clostridium perfringens (strain 13 / Type A).